Here is a 298-residue protein sequence, read N- to C-terminus: Acetylglutamate kinase (298 aa).

Residues 69-70 (GG), arginine 91, and asparagine 191 contribute to the substrate site.

It belongs to the acetylglutamate kinase family. ArgB subfamily.

It localises to the cytoplasm. The catalysed reaction is N-acetyl-L-glutamate + ATP = N-acetyl-L-glutamyl 5-phosphate + ADP. The protein operates within amino-acid biosynthesis; L-arginine biosynthesis; N(2)-acetyl-L-ornithine from L-glutamate: step 2/4. Its function is as follows. Catalyzes the ATP-dependent phosphorylation of N-acetyl-L-glutamate. This is Acetylglutamate kinase from Neisseria meningitidis serogroup C (strain 053442).